A 161-amino-acid chain; its full sequence is Allophycocyanin alpha chain (161 aa).

N71 is subject to N4-methylasparagine. C81 serves as a coordination point for (2R,3E)-phycocyanobilin.

This sequence belongs to the phycobiliprotein family. In terms of assembly, heterodimer of an alpha and a beta chain. Contains one covalently linked phycocyanobilin chromophore.

Its subcellular location is the plastid. The protein resides in the chloroplast thylakoid membrane. Functionally, light-harvesting photosynthetic bile pigment-protein from the phycobiliprotein complex. Allophycocyanin has a maximum absorption at approximately 650 nanometers. This is Allophycocyanin alpha chain (apcA) from Aglaothamnion neglectum (Red alga).